Reading from the N-terminus, the 315-residue chain is Ribosomal RNA small subunit methyltransferase H (315 aa).

S-adenosyl-L-methionine is bound by residues 35–37 (AGH), aspartate 55, phenylalanine 84, aspartate 105, and glutamine 112.

The protein belongs to the methyltransferase superfamily. RsmH family.

It is found in the cytoplasm. The enzyme catalyses cytidine(1402) in 16S rRNA + S-adenosyl-L-methionine = N(4)-methylcytidine(1402) in 16S rRNA + S-adenosyl-L-homocysteine + H(+). In terms of biological role, specifically methylates the N4 position of cytidine in position 1402 (C1402) of 16S rRNA. The sequence is that of Ribosomal RNA small subunit methyltransferase H from Streptococcus agalactiae serotype Ia (strain ATCC 27591 / A909 / CDC SS700).